A 91-amino-acid chain; its full sequence is Tachykinin-like peptide (91 aa).

The first 19 residues, 1–19, serve as a signal peptide directing secretion; that stretch reads MKILVAFAVIMLVSAQVLA. A propeptide spanning residues 20 to 51 is cleaved from the precursor; sequence AEIGLNDEPEWYSDQIQEDLPVFENFLQRIAR. M62 is modified (methionine amide). A disordered region spans residues 64–91; sequence KRNNGFGQMSRKRSAERNTIHNYERRRK. A propeptide spanning residues 66 to 91 is cleaved from the precursor; it reads NNGFGQMSRKRSAERNTIHNYERRRK. Basic and acidic residues predominate over residues 76-91; that stretch reads RSAERNTIHNYERRRK.

As to expression, expressed by the skin glands.

The protein resides in the secreted. Tachykinins are active peptides which excite neurons, evoke behavioral responses, are potent vasodilators and secretagogues, and contract (directly or indirectly) many smooth muscles. In vitro, induces contraction of guinea pig ileum smooth muscle in a dose-dependent manner. This chain is Tachykinin-like peptide, found in Theloderma corticale (Kwangsi warty tree frog).